Here is a 322-residue protein sequence, read N- to C-terminus: Transcription cofactor vestigial-like protein 2 (322 aa).

Residues 42–61 are compositionally biased toward low complexity; sequence ASPGSSASGSSSFSNPTPAS. 2 disordered regions span residues 42–75 and 248–322; these read ASPG…ERPP and PGRL…PTLG. Residues 62–75 show a composition bias toward basic and acidic residues; sequence VKEEEGSPEKERPP. Low complexity-rich tracts occupy residues 248-258 and 270-283; these read PGRLAPASAPA and GEPA…PGGP. The span at 312–322 shows a compositional bias: pro residues; that stretch reads SAPPALYPTLG.

The protein belongs to the vestigial family. As to quaternary structure, interacts with TEFs. Binds to TEAD1/TEF1. In terms of tissue distribution, skeletal muscle specific.

It is found in the nucleus. Its function is as follows. May act as a specific coactivator for the mammalian TEFs. May play a role in the development of skeletal muscles. This is Transcription cofactor vestigial-like protein 2 (Vgll2) from Mus musculus (Mouse).